A 260-amino-acid polypeptide reads, in one-letter code: Hydroxyethylthiazole kinase (260 aa).

M38 contacts substrate. Residues R114 and T159 each coordinate ATP. G186 contributes to the substrate binding site.

The protein belongs to the Thz kinase family. Requires Mg(2+) as cofactor.

The catalysed reaction is 5-(2-hydroxyethyl)-4-methylthiazole + ATP = 4-methyl-5-(2-phosphooxyethyl)-thiazole + ADP + H(+). Its pathway is cofactor biosynthesis; thiamine diphosphate biosynthesis; 4-methyl-5-(2-phosphoethyl)-thiazole from 5-(2-hydroxyethyl)-4-methylthiazole: step 1/1. Catalyzes the phosphorylation of the hydroxyl group of 4-methyl-5-beta-hydroxyethylthiazole (THZ). The polypeptide is Hydroxyethylthiazole kinase (Helicobacter pylori (strain HPAG1)).